A 473-amino-acid chain; its full sequence is Sun domain-containing protein 1 (473 aa).

The tract at residues 1–47 (MALRHTISPQFSNRHSPPVTRSVSRTGVHQPLDTSTPVTRRDSQPGT) is disordered. Residues 7–47 (ISPQFSNRHSPPVTRSVSRTGVHQPLDTSTPVTRRDSQPGT) show a composition bias toward polar residues. 2 coiled-coil regions span residues 163–191 (ISNL…LENV) and 204–235 (EELK…STKI). The segment at 237-257 (HSTPEKAPETAPTASLPPSSQ) is disordered. The span at 248 to 257 (PTASLPPSSQ) shows a compositional bias: polar residues. The helical transmembrane segment at 262 to 282 (HITRRALLGVNVANSLIGASI) threads the bilayer. The 165-residue stretch at 279-443 (GASIDHSCSS…YLIRVYGEPV (165 aa)) folds into the SUN domain. The tract at residues 443-473 (VDPPKETQPMTDNGTESKLESAIVNSVSETA) is disordered.

The protein resides in the nucleus membrane. It localises to the nucleus envelope. Its function is as follows. Involved in centrosome attachment to the nucleus. Required for zyg-12 localization to the nuclear envelope. Together with pot-1, it is required to anchor telomeres to the nuclear envelope in embryos. This chain is Sun domain-containing protein 1, found in Caenorhabditis elegans.